The chain runs to 648 residues: Indolepyruvate oxidoreductase subunit IorA (648 aa).

4Fe-4S ferredoxin-type domains follow at residues 585-614 (PIYQ…WDPE) and 616-645 (KKAK…KVRE). [4Fe-4S] cluster contacts are provided by C594, C597, C600, C606, C625, C628, C631, and C635.

In terms of assembly, heterodimer of the IorA and IorB subunits. [4Fe-4S] cluster is required as a cofactor.

It carries out the reaction indole-3-pyruvate + 2 oxidized [2Fe-2S]-[ferredoxin] + CoA = (indol-3-yl)acetyl-CoA + 2 reduced [2Fe-2S]-[ferredoxin] + CO2 + H(+). In terms of biological role, catalyzes the ferredoxin-dependent oxidative decarboxylation of arylpyruvates. This chain is Indolepyruvate oxidoreductase subunit IorA (iorA), found in Pyrococcus abyssi (strain GE5 / Orsay).